The primary structure comprises 470 residues: MKAFPETFLWGGATAANQVEGAWQEDGKGISTSDLQPHGVMGKMEPRILGKENIKDVAIDFYHRYPEDIALFAEMGFTCLRISIAWARIFPQGDEVEPNEAGLAFYDRLFDEMAQAGIKPLVTLSHYEMPYGLVKNYGGWANRAVIDHFEHYARTVFTRYQHKVALWLTFNEINMSLHAPFTGVGLAEESGEAEVYQAIHHQLVASARAVKACHSLLPEAKIGNMLLGGLVYPLTCQPQDMLQAMEENRRWMFFGDVQARGQYPGYMQRFFRDHNITIEMTESDAEDLKHTVDFISFSYYMTGCVSHDESINKNAQGNILNMIPNPHLKSSEWGWQIDPVGLRVLLNTLWDRYQKPLFIVENGLGAKDSVEADGSIQDDYRIAYLNDHLVQVNEAIADGVDIMGYTSWGPIDLVSASHSQMSKRYGFIYVDRDDNGEGSLTRTRKKSFGWYAEVIKTRGLSLKKITIKAP.

The Proton donor role is filled by glutamate 172. Catalysis depends on glutamate 361, which acts as the Nucleophile.

Belongs to the glycosyl hydrolase 1 family.

The enzyme catalyses 6-phospho-beta-D-glucosyl-(1-&gt;4)-D-glucose + H2O = D-glucose 6-phosphate + D-glucose. Functionally, catalyzes the hydrolysis of phosphorylated beta-glucosides into glucose-6-phosphate (G-6-P) and aglycone. It has a high affinity for phosphorylated aromatic beta-glucosides (p-nitrophenyl-beta-glucoside, phenyl beta-glucoside, arbutin and phosphorylated salicin), and a low affinity for phosphorylated beta-methyl-glucoside. The chain is 6-phospho-beta-glucosidase BglB (bglB) from Escherichia coli (strain K12).